We begin with the raw amino-acid sequence, 104 residues long: MQQNQRIRIRLKAFDHRLIDQSTSEIVETAKRTGAQVRGPIPLPTHKEKFTVLISPHVNKDARDQYEIRTHKRLIDIVEPTEKTVDALMRLDLAAGVDVQISLG.

The protein belongs to the universal ribosomal protein uS10 family. In terms of assembly, part of the 30S ribosomal subunit.

In terms of biological role, involved in the binding of tRNA to the ribosomes. The protein is Small ribosomal subunit protein uS10 of Buchnera aphidicola subsp. Baizongia pistaciae (strain Bp).